The sequence spans 204 residues: Lysozyme g (204 aa).

A signal peptide spans 1–19 (MHLMLVLLGLAALLGTSQS). Disulfide bonds link Cys23/Cys79 and Cys37/Cys48. Catalysis depends on residues Glu92 and Asp105.

It belongs to the glycosyl hydrolase 23 family.

The protein resides in the secreted. It carries out the reaction Hydrolysis of (1-&gt;4)-beta-linkages between N-acetylmuramic acid and N-acetyl-D-glucosamine residues in a peptidoglycan and between N-acetyl-D-glucosamine residues in chitodextrins.. Functionally, has bacteriolytic activity against M.luteus. In Struthio camelus (Common ostrich), this protein is Lysozyme g.